The following is a 240-amino-acid chain: 2,3,4,5-tetrahydropyridine-2,6-dicarboxylate N-acetyltransferase (240 aa).

This sequence belongs to the transferase hexapeptide repeat family. DapH subfamily.

The enzyme catalyses (S)-2,3,4,5-tetrahydrodipicolinate + acetyl-CoA + H2O = L-2-acetamido-6-oxoheptanedioate + CoA. The protein operates within amino-acid biosynthesis; L-lysine biosynthesis via DAP pathway; LL-2,6-diaminopimelate from (S)-tetrahydrodipicolinate (acetylase route): step 1/3. In terms of biological role, catalyzes the transfer of an acetyl group from acetyl-CoA to tetrahydrodipicolinate. The polypeptide is 2,3,4,5-tetrahydropyridine-2,6-dicarboxylate N-acetyltransferase (Staphylococcus epidermidis (strain ATCC 12228 / FDA PCI 1200)).